Reading from the N-terminus, the 448-residue chain is Methylenetetrahydrofolate--tRNA-(uracil-5-)-methyltransferase TrmFO (448 aa).

13–18 contributes to the FAD binding site; that stretch reads GAGLAG.

It belongs to the MnmG family. TrmFO subfamily. FAD is required as a cofactor.

It localises to the cytoplasm. The enzyme catalyses uridine(54) in tRNA + (6R)-5,10-methylene-5,6,7,8-tetrahydrofolate + NADH + H(+) = 5-methyluridine(54) in tRNA + (6S)-5,6,7,8-tetrahydrofolate + NAD(+). It catalyses the reaction uridine(54) in tRNA + (6R)-5,10-methylene-5,6,7,8-tetrahydrofolate + NADPH + H(+) = 5-methyluridine(54) in tRNA + (6S)-5,6,7,8-tetrahydrofolate + NADP(+). Catalyzes the folate-dependent formation of 5-methyl-uridine at position 54 (M-5-U54) in all tRNAs. The chain is Methylenetetrahydrofolate--tRNA-(uracil-5-)-methyltransferase TrmFO from Streptococcus pyogenes serotype M6 (strain ATCC BAA-946 / MGAS10394).